Reading from the N-terminus, the 350-residue chain is Uroporphyrinogen decarboxylase (350 aa).

Residues 23 to 27 (RQAGR), Asp-73, Tyr-150, Thr-205, and His-322 contribute to the substrate site.

Belongs to the uroporphyrinogen decarboxylase family. As to quaternary structure, homodimer.

Its subcellular location is the cytoplasm. The catalysed reaction is uroporphyrinogen III + 4 H(+) = coproporphyrinogen III + 4 CO2. It functions in the pathway porphyrin-containing compound metabolism; protoporphyrin-IX biosynthesis; coproporphyrinogen-III from 5-aminolevulinate: step 4/4. Its function is as follows. Catalyzes the decarboxylation of four acetate groups of uroporphyrinogen-III to yield coproporphyrinogen-III. This chain is Uroporphyrinogen decarboxylase, found in Methylococcus capsulatus (strain ATCC 33009 / NCIMB 11132 / Bath).